The primary structure comprises 89 residues: Small ribosomal subunit protein uS15 (89 aa).

Residues 1–20 (MSITQERKSALIAEHARGKT) show a composition bias toward basic and acidic residues. Residues 1 to 24 (MSITQERKSALIAEHARGKTDTGS) form a disordered region.

It belongs to the universal ribosomal protein uS15 family. In terms of assembly, part of the 30S ribosomal subunit. Forms a bridge to the 50S subunit in the 70S ribosome, contacting the 23S rRNA.

Functionally, one of the primary rRNA binding proteins, it binds directly to 16S rRNA where it helps nucleate assembly of the platform of the 30S subunit by binding and bridging several RNA helices of the 16S rRNA. In terms of biological role, forms an intersubunit bridge (bridge B4) with the 23S rRNA of the 50S subunit in the ribosome. This is Small ribosomal subunit protein uS15 from Maricaulis maris (strain MCS10) (Caulobacter maris).